The chain runs to 309 residues: Ribosomal RNA small subunit methyltransferase H (309 aa).

Residues 32-34 (AGH), D52, F79, D100, and Q107 contribute to the S-adenosyl-L-methionine site.

The protein belongs to the methyltransferase superfamily. RsmH family.

It is found in the cytoplasm. The enzyme catalyses cytidine(1402) in 16S rRNA + S-adenosyl-L-methionine = N(4)-methylcytidine(1402) in 16S rRNA + S-adenosyl-L-homocysteine + H(+). Its function is as follows. Specifically methylates the N4 position of cytidine in position 1402 (C1402) of 16S rRNA. The sequence is that of Ribosomal RNA small subunit methyltransferase H from Mycoplasma capricolum subsp. capricolum (strain California kid / ATCC 27343 / NCTC 10154).